Reading from the N-terminus, the 211-residue chain is Mediator of RNA polymerase II transcription subunit 18 (211 aa).

Belongs to the Mediator complex subunit 18 family. As to quaternary structure, component of the Mediator complex.

The protein localises to the nucleus. Component of the Mediator complex, a coactivator involved in the regulated transcription of nearly all RNA polymerase II-dependent genes. Mediator functions as a bridge to convey information from gene-specific regulatory proteins to the basal RNA polymerase II transcription machinery. Mediator is recruited to promoters by direct interactions with regulatory proteins and serves as a scaffold for the assembly of a functional preinitiation complex with RNA polymerase II and the general transcription factors. This Anopheles gambiae (African malaria mosquito) protein is Mediator of RNA polymerase II transcription subunit 18 (MED18).